We begin with the raw amino-acid sequence, 1017 residues long: Rho-GTPase-activating protein LRG1 (1017 aa).

Methionine 1 is modified (N-acetylmethionine). LIM zinc-binding domains follow at residues 28–88 (CARC…LCQY) and 98–148 (CHVC…CKYH). The 30-residue stretch at 155 to 184 (KRCKGCEFPISDQYIEFPKGEEIHCWHPEC) folds into the LIM zinc-binding 3; truncated domain. An LIM zinc-binding 4 domain is found at 419 to 474 (CAGCNKYIQEECIQFYEHRWHIACFTCSSCHKNINPRSLTDPTFNKEKKKILCSHC). Position 562 is a phosphoserine (serine 562). Residues 570–602 (TDLNDPTKQGDSKNLVIQTDDPSSSQQVSTREN) are disordered. Over residues 584–602 (LVIQTDDPSSSQQVSTREN) the composition is skewed to polar residues. The 224-residue stretch at 730–953 (APLDVLCEKW…YLITHNEEMA (224 aa)) folds into the Rho-GAP domain.

In terms of assembly, interacts with CDC42, RHO1 and RHO2.

The protein localises to the cytoplasm. It is found in the bud. Its subcellular location is the bud neck. In terms of biological role, acts in signal transduction. Activates CDC42, RHO1 and RHO2. Negatively regulates 1,3-beta-glucan synthesis. May be responsible for the down-regulation of CDC42 during mating. The sequence is that of Rho-GTPase-activating protein LRG1 (LRG1) from Saccharomyces cerevisiae (strain ATCC 204508 / S288c) (Baker's yeast).